We begin with the raw amino-acid sequence, 482 residues long: [Fructose-bisphosphate aldolase]-lysine N-methyltransferase, chloroplastic (482 aa).

Residues 1 to 57 (MSASVAVVSGFLRIPSIQKSQNPSFLFSRPKKSLVRPISASSSELPENVRNFWKWLR) constitute a chloroplast transit peptide. The region spanning 59–282 (QGVVSGKSVA…AGEQVYIQYD (224 aa)) is the SET domain. S-adenosyl-L-methionine contacts are provided by residues 75–77 (EGL) and Arg217. Residues Arg217, Arg221, and Asp234 each coordinate substrate. 237-238 (NH) is a binding site for S-adenosyl-L-methionine. Substrate-binding residues include Tyr249, Tyr281, and Tyr294.

This sequence belongs to the class V-like SAM-binding methyltransferase superfamily. Plant protein-lysine LSMT methyltransferase family.

It is found in the plastid. The protein resides in the chloroplast stroma. It catalyses the reaction [fructose-bisphosphate aldolase]-L-lysine + 3 S-adenosyl-L-methionine = [fructose-bisphosphate aldolase]-N(6),N(6),N(6)-trimethyl-L-lysine + 3 S-adenosyl-L-homocysteine + 3 H(+). In terms of biological role, protein-lysine methyltransferase methylating chloroplastic fructose 1,6-bisphosphate aldolases. Can also use with low efficiency gamma-tocopherol methyltransferase as substrate, but not a cytosolic aldolase. Able to interact with unmethylated Rubisco, but unlike in pea, the complex is catalytically unproductive. This chain is [Fructose-bisphosphate aldolase]-lysine N-methyltransferase, chloroplastic (LSMT-L), found in Arabidopsis thaliana (Mouse-ear cress).